A 401-amino-acid chain; its full sequence is Lipid-A-disaccharide synthase (401 aa).

This sequence belongs to the LpxB family.

The enzyme catalyses a lipid X + a UDP-2-N,3-O-bis[(3R)-3-hydroxyacyl]-alpha-D-glucosamine = a lipid A disaccharide + UDP + H(+). Its pathway is bacterial outer membrane biogenesis; LPS lipid A biosynthesis. Condensation of UDP-2,3-diacylglucosamine and 2,3-diacylglucosamine-1-phosphate to form lipid A disaccharide, a precursor of lipid A, a phosphorylated glycolipid that anchors the lipopolysaccharide to the outer membrane of the cell. The protein is Lipid-A-disaccharide synthase of Ruegeria pomeroyi (strain ATCC 700808 / DSM 15171 / DSS-3) (Silicibacter pomeroyi).